The following is a 585-amino-acid chain: Pyruvate kinase (585 aa).

R32 lines the substrate pocket. K(+)-binding residues include N34, S36, D66, and T67. 34-37 (NFSH) serves as a coordination point for ATP. R73 and K156 together coordinate ATP. E221 lines the Mg(2+) pocket. The substrate site is built by G244, D245, and T277. Position 245 (D245) interacts with Mg(2+).

The protein belongs to the pyruvate kinase family. In the C-terminal section; belongs to the PEP-utilizing enzyme family. Requires Mg(2+) as cofactor. K(+) is required as a cofactor.

It carries out the reaction pyruvate + ATP = phosphoenolpyruvate + ADP + H(+). Its pathway is carbohydrate degradation; glycolysis; pyruvate from D-glyceraldehyde 3-phosphate: step 5/5. The polypeptide is Pyruvate kinase (pyk) (Staphylococcus aureus (strain MRSA252)).